The following is a 208-amino-acid chain: MSPPLPQAPQQPAPRRGLGHDTAVAAVCGLVVALMVGASFAAVPFYNWFCRTTGFNGTTQVAHAVPSSAPLDRTVTVSFDSNVNGLPWKFEPEQREIEVPIGKVVTVYYRITNLSRSDTVGQAAYNVTPLTVGSYFTKINCFCFTEQPLAAGESRDMPVVFYIDPAFAADSENDTVKTITLSYTYYPVRDPAPKPVASSEPAPRKGNL.

Over methionine 1–glycine 19 the chain is Cytoplasmic. A helical; Signal-anchor for type II membrane protein transmembrane segment spans residues histidine 20 to alanine 42. Over valine 43–leucine 208 the chain is Periplasmic.

The protein belongs to the COX11/CtaG family.

Its subcellular location is the cell inner membrane. Functionally, exerts its effect at some terminal stage of cytochrome c oxidase synthesis, probably by being involved in the insertion of the copper B into subunit I. This Rhodopseudomonas palustris (strain TIE-1) protein is Cytochrome c oxidase assembly protein CtaG.